A 300-amino-acid polypeptide reads, in one-letter code: Ribosomal protein L11 methyltransferase (300 aa).

S-adenosyl-L-methionine is bound by residues Thr148, Gly171, Asp193, and Asn235.

It belongs to the methyltransferase superfamily. PrmA family.

It is found in the cytoplasm. The catalysed reaction is L-lysyl-[protein] + 3 S-adenosyl-L-methionine = N(6),N(6),N(6)-trimethyl-L-lysyl-[protein] + 3 S-adenosyl-L-homocysteine + 3 H(+). Functionally, methylates ribosomal protein L11. This Desulfotalea psychrophila (strain LSv54 / DSM 12343) protein is Ribosomal protein L11 methyltransferase.